Reading from the N-terminus, the 430-residue chain is MGYEDEFPESLELFKRAERVMPGGVSSPVRRFDPYPFYVERAEGSRLYTVDGHVLIDYCLAFGPLILGHAHPEVVEAVVERVREGFHYGTPTLPELKLAEKVVELVPNVEKVRLVNTGTEATMSAIRLARAYTGREKIVKFEGCYHGAHDAVLVRAGSGASELGAPDSPGIPESVAENTLVCPFNDVEAFVETVERFDEEIGAVIVEPVLGNAGCVPPDEEFLKVLREYCDGTERLLIFDEVITGFRLELGGAQEYYGIDADLVCLGKILGGGLPIGAFGGPEEYMSRVAPEGKVYQAGTFNGNPVSATAGLVTLEVLERERPYDELSSKAERLASALEDGLEDRGIEGVVNRVESMFQVYFGIEEVRDYADVNSADHDAFKRFHRELLEHGVWIAASNYEAWFLSIAHTETDLERTEEAFEEALDRLTG.

Lys268 bears the N6-(pyridoxal phosphate)lysine mark.

It belongs to the class-III pyridoxal-phosphate-dependent aminotransferase family. HemL subfamily. The cofactor is pyridoxal 5'-phosphate.

The protein localises to the cytoplasm. It catalyses the reaction (S)-4-amino-5-oxopentanoate = 5-aminolevulinate. It functions in the pathway porphyrin-containing compound metabolism; protoporphyrin-IX biosynthesis; 5-aminolevulinate from L-glutamyl-tRNA(Glu): step 2/2. The polypeptide is Glutamate-1-semialdehyde 2,1-aminomutase (Methanopyrus kandleri (strain AV19 / DSM 6324 / JCM 9639 / NBRC 100938)).